We begin with the raw amino-acid sequence, 272 residues long: Catabolic 3-dehydroquinate dehydratase (272 aa).

Residues 66–68 (EFR) and arginine 102 contribute to the 3-dehydroquinate site. Catalysis depends on histidine 163, which acts as the Proton donor/acceptor. Lysine 190 acts as the Schiff-base intermediate with substrate in catalysis. 3 residues coordinate 3-dehydroquinate: arginine 232, serine 251, and glutamine 255.

Belongs to the type-I 3-dehydroquinase family.

It carries out the reaction 3-dehydroquinate = 3-dehydroshikimate + H2O. It participates in aromatic compound metabolism; 3,4-dihydroxybenzoate biosynthesis; 3,4-dihydroxybenzoate from 3-dehydroquinate: step 1/2. Its function is as follows. Involved in the biosynthesis of protocatechuate. Catalyzes the catabolic dehydration of 3-dehydroquinate (DHQ) to yield 3-dehydroshikimate. This chain is Catabolic 3-dehydroquinate dehydratase, found in Acinetobacter baylyi (strain ATCC 33305 / BD413 / ADP1).